We begin with the raw amino-acid sequence, 480 residues long: Pyruvate kinase (480 aa).

Residue R36 participates in substrate binding. The K(+) site is built by N38, S40, and D70. 38–41 (NFSH) is an ATP binding site. Residues R77 and K160 each coordinate ATP. Residue E225 participates in Mg(2+) binding. 3 residues coordinate substrate: G251, D252, and T284. D252 contacts Mg(2+).

The protein belongs to the pyruvate kinase family. In terms of assembly, homotetramer. It depends on Mg(2+) as a cofactor. Requires K(+) as cofactor.

It catalyses the reaction pyruvate + ATP = phosphoenolpyruvate + ADP + H(+). It participates in carbohydrate degradation; glycolysis; pyruvate from D-glyceraldehyde 3-phosphate: step 5/5. With respect to regulation, allosterically activated by AMP and by several sugar phosphates. Belongs to type II PK. The sequence is that of Pyruvate kinase (pykA) from Buchnera aphidicola subsp. Acyrthosiphon pisum (strain APS) (Acyrthosiphon pisum symbiotic bacterium).